Reading from the N-terminus, the 355-residue chain is Tabersonine 16-O-methyltransferase (355 aa).

S-adenosyl-L-methionine-binding positions include 198-201 (IGGG), aspartate 222, 222-223 (DL), 242-243 (DM), and lysine 256. Catalysis depends on histidine 260, which acts as the Proton acceptor.

It belongs to the class I-like SAM-binding methyltransferase superfamily. Cation-independent O-methyltransferase family. COMT subfamily. In terms of assembly, homodimer. Expressed in leaves and flowers. Detected in stems and roots. In leaves, expressed in epidermal cells.

The protein resides in the cytoplasm. It carries out the reaction 16-hydroxytabersonine + S-adenosyl-L-methionine = 16-methoxytabersonine + S-adenosyl-L-homocysteine + H(+). It participates in alkaloid biosynthesis; vindoline biosynthesis. Its function is as follows. 16-O-methyltransferase involved in the biosynthesis of vindoline. Highly specific for 16-hydroxytabersonine. No activity with tabersonine, 3-hydroxytyramine, 4-hydroxytyramine, 5-hydroxytryptamine (5HT), 2,3-dihydro-3-hydroxytabersonine, lochnericine, hoerhammericine, 16-hydroxy-2,3-dihydro-3-hydroxytabersonine, 16-hydroxylochnericine, 16-hydroxyhoerhammericine, quercetin, kaempferol and caffeic acid as substrates. The polypeptide is Tabersonine 16-O-methyltransferase (Catharanthus roseus (Madagascar periwinkle)).